Here is a 320-residue protein sequence, read N- to C-terminus: L-lactate dehydrogenase A (320 aa).

Residues Arg-88, Asn-120, and Arg-151 each coordinate substrate. Asn-120 is a binding site for NAD(+). The active-site Proton acceptor is His-175.

This sequence belongs to the LDH/MDH superfamily. LDH family. In terms of assembly, homotetramer.

The protein localises to the cytoplasm. The catalysed reaction is (S)-lactate + NAD(+) = pyruvate + NADH + H(+). It functions in the pathway fermentation; pyruvate fermentation to lactate; (S)-lactate from pyruvate: step 1/1. Converts pyruvate to lactate. This Rhizopus oryzae (Mucormycosis agent) protein is L-lactate dehydrogenase A (LDHA).